The following is a 762-amino-acid chain: Probable disease resistance protein At1g61300 (762 aa).

A lipid anchor (N-myristoyl glycine) is attached at glycine 2. 2 S-palmitoyl cysteine lipidation sites follow: cysteine 3 and cysteine 4. An NB-ARC domain is found at 26 to 329 (NINRNSFGVE…CEGFIGEDQV (304 aa)). ATP is bound at residue 68 to 75 (GMGGVGKT). 5 LRR repeats span residues 401–422 (AVRRMSLMDNHIEEITCESKCS), 423–444 (ELTTLFLQSNQLKNLSGEFIRY), 447–470 (KLVVLDLSYNRDFNKLPEQISGLV), 471–493 (SLQFLDLSNTSIKQLPVGLKKLK), and 494–516 (KLTFLNLAYTVRLCSISGISRLL).

Belongs to the disease resistance NB-LRR family.

Its subcellular location is the cell membrane. Its function is as follows. Probable disease resistance protein. This Arabidopsis thaliana (Mouse-ear cress) protein is Probable disease resistance protein At1g61300.